Consider the following 2474-residue polypeptide: Serine/threonine-protein kinase TOR2 (2474 aa).

Residues 1–62 (MNKYINKYTT…NGPNDSGRVI (62 aa)) form a disordered region. T10 carries the phosphothreonine modification. Residues 25-36 (HRTRKKLTHKSH) show a composition bias toward basic residues. Residues 43 to 56 (STTSNTDSNHNGPN) are compositionally biased toward polar residues. HEAT repeat units lie at residues 588-626 (YSLTEFVRLITISYIEHEDSSVRKLAALTSCDLFIKDDI), 636-674 (HSVSEVLSKLLMIAITDPVAEIRLEILQHLGSNFDPQLA), 676-710 (PDNLRLLFMALNDEIFGIQLEAIKIIGRLSSVNPA), 756-793 (PYIDPILDVILPKCQDASSAVASTALKVLGELSVVGGK), 797-835 (RYLKELMPLIINTFQDQSNSFKRDAALTTLGQLAASSGY), 841-879 (LDYPELLGILINILKTENNPHIRRGTVRLIGILGALDPY), 917-955 (YYPTVVIHNLMKILNDPSLSIHHTAAIQAIMHIFQNLGL), 1039-1076 (RFVPETLTFFLDILENDQSNKRIVPIRILKSLVTFGPN), 1079-1116 (DYSHLIMPIVVRMTEYSAGSLKKISIITLGRLAKNINL), 1118-1155 (EMSSRIVQALVRILNNGDRELTKATMNTLSLLLLQLGT), and 1292-1331 (SYQEDLIQALCKALSSSENPPEIYQMLLNLVEFMEHDDKP). An FAT domain is found at 1338–1922 (TLGKYAQKCH…VYPLMVAIKS (585 aa)). The PI3K/PI4K catalytic domain occupies 2097 to 2421 (FEPVFSVISS…EHKNAIRNAR (325 aa)). The segment at 2103–2109 (VISSKQR) is G-loop. The interval 2276-2284 (GLGDRHPSN) is catalytic loop. Residues 2296-2321 (HIDFGDCFEAAILREKFPEKVPFRLT) are activation loop. An FATC domain is found at 2442 to 2474 (NDLDVPEQVDKLIQQATSVENLCQHYIGWCPFW).

The protein belongs to the PI3/PI4-kinase family. In terms of assembly, the target of rapamycin complex 1 (TORC1) is composed of at least KOG1, LST8, TCO89 and either TOR1 (TORC1-A) or TOR2 (TORC1-B). TORC1 binds to and is inhibited by FKBP-rapamycin. Interacts with PIB2; following activation of PIB2 by glutamine. The target of rapamycin complex 2 (TORC2) is composed of at least AVO1, AVO2, BIT61, LST8, TOR2 and TSC11. TORC2 forms a homodimer. Contrary to TORC1, TORC2 does not bind to and is not sensitive to FKBP-rapamycin. Interacts with SLM1 and SLM2.

It localises to the cell membrane. Its subcellular location is the vacuole membrane. The enzyme catalyses L-seryl-[protein] + ATP = O-phospho-L-seryl-[protein] + ADP + H(+). The catalysed reaction is L-threonyl-[protein] + ATP = O-phospho-L-threonyl-[protein] + ADP + H(+). It catalyses the reaction a 1,2-diacyl-sn-glycero-3-phospho-(1D-myo-inositol) + ATP = a 1,2-diacyl-sn-glycero-3-phospho-(1D-myo-inositol 4-phosphate) + ADP + H(+). Its function is as follows. Phosphatidylinositol 3-kinase homolog, component of both TORC1 and TORC2. TORC1 regulates multiple cellular processes to control cell growth in response to environmental signals. Nutrient limitation and environmental stress signals cause inactivation of TORC1. Active TORC1 positively controls ribosome biogenesis via control of rRNA, ribosomal protein and tRNA gene expression, and rRNA processing. TORC1 positively controls protein biosynthesis by regulation of mRNA stability, translation initiation factor activity, and high-affinity amino acid permeases that serve to provide amino acids for use by the translation machinery. TORC1 also promotes growth by sequestering a number of nutrient and general stress-responsive transcription factors in the cytoplasm. TORC1 negatively controls macroautophagy, a process to recycle surplus cytoplasmic mass under nutrient starvation conditions. TORC1 controls many of these processes via TIP41-TAP42-mediated inhibition of the type 2A-related phosphatases PP2A and SIT4. In nutrient-rich conditions, responsible for the phosphorylation of AGC S6 kinase (S6K) YPK3, activating YPK3 kinase activity and promoting phosphorylation of ribosomal protein S6. Phosphorylates kinase SCH9 at 6 amino acids in the C-terminus, activating SCH9 kinase activity to properly regulate ribosome biogenesis, translation initiation, and entry into stationary phase. TORC2 regulates cell cycle-dependent polarization of the actin-cytoskeleton, cell wall integrity, and receptor endocytosis. TORC2 controls polarity of the actin cytoskeleton, which is required for orienting the secretory pathway toward discrete growth sites, via the RHO1/PKC1/MAPK cell integrity pathway by activating the RHO1 guanine nucleotide exchange factor ROM2. TORC2 phosphorylates the AGC kinase YPK2, an upstream effector of the cell integrity pathway. TORC2 negatively regulates calcineurin-dependent stress signaling via phosphorylation of its effector SLM1-SLM2. This is Serine/threonine-protein kinase TOR2 (TOR2) from Saccharomyces cerevisiae (strain ATCC 204508 / S288c) (Baker's yeast).